The primary structure comprises 495 residues: Lysine--tRNA ligase (495 aa).

2 residues coordinate Mg(2+): Glu-406 and Glu-413.

The protein belongs to the class-II aminoacyl-tRNA synthetase family. In terms of assembly, homodimer. Mg(2+) is required as a cofactor.

The protein resides in the cytoplasm. It catalyses the reaction tRNA(Lys) + L-lysine + ATP = L-lysyl-tRNA(Lys) + AMP + diphosphate. In Staphylococcus epidermidis (strain ATCC 35984 / DSM 28319 / BCRC 17069 / CCUG 31568 / BM 3577 / RP62A), this protein is Lysine--tRNA ligase.